A 269-amino-acid polypeptide reads, in one-letter code: 2-dehydro-3-deoxyphosphooctonate aldolase (269 aa).

The protein belongs to the KdsA family.

The protein localises to the cytoplasm. It catalyses the reaction D-arabinose 5-phosphate + phosphoenolpyruvate + H2O = 3-deoxy-alpha-D-manno-2-octulosonate-8-phosphate + phosphate. Its pathway is carbohydrate biosynthesis; 3-deoxy-D-manno-octulosonate biosynthesis; 3-deoxy-D-manno-octulosonate from D-ribulose 5-phosphate: step 2/3. It functions in the pathway bacterial outer membrane biogenesis; lipopolysaccharide biosynthesis. This Chlamydia trachomatis serovar L2 (strain ATCC VR-902B / DSM 19102 / 434/Bu) protein is 2-dehydro-3-deoxyphosphooctonate aldolase.